A 553-amino-acid chain; its full sequence is Tether containing UBX domain for GLUT4 (553 aa).

Position 2 is an N-acetylalanine (alanine 2). The segment covering 182–202 (PGSLGSSASAGQAAASAPLPL) has biased composition (low complexity). The interval 182-324 (PGSLGSSASA…REPVDREPVV (143 aa)) is disordered. At serine 184 the chain carries Phosphoserine. The segment covering 206 to 217 (ELSRGDLSRPED) has biased composition (basic and acidic residues). The segment covering 260-280 (RPLTSSSAKLPKSLSSPGGPS) has biased composition (low complexity). Serine 275 carries the post-translational modification Phosphoserine. A compositionally biased stretch (basic and acidic residues) spans 296-324 (EQERERDPQQEQERERPVDREPVDREPVV). An interaction with GLUT4 region spans residues 317–380 (PVDREPVVCH…LVTKAFREAQ (64 aa)). The region spanning 386 to 462 (ERYPKVALRV…NLFPAALVHL (77 aa)) is the UBX domain. The disordered stretch occupies residues 499–536 (GSPSPLPAPDPAPKSEPAAEEGALVPPEPIPGTAQPVK). Serine 500 and serine 502 each carry phosphoserine. Pro residues predominate over residues 502 to 512 (SPLPAPDPAPK).

Interacts with GLUT4. Interacts with VCPKMT. Interacts with VCP. In terms of tissue distribution, ubiquitous. Highly expressed in testis, heart, skeletal muscle and pancreas.

The protein localises to the endomembrane system. It is found in the endoplasmic reticulum-Golgi intermediate compartment membrane. It localises to the cytoplasm. The protein resides in the nucleus. Functionally, tethering protein that sequesters GLUT4-containing vesicles in the cytoplasm in the absence of insulin. Modulates the amount of GLUT4 that is available at the cell surface. Enhances VCP methylation catalyzed by VCPKMT. This chain is Tether containing UBX domain for GLUT4 (ASPSCR1), found in Homo sapiens (Human).